A 120-amino-acid polypeptide reads, in one-letter code: Cell division topological specificity factor (120 aa).

The tract at residues 93–120 (LNSCEGENPQQDPGAAPSEGGHLSSPSP) is disordered.

Belongs to the MinE family.

Its function is as follows. Prevents the cell division inhibition by proteins MinC and MinD at internal division sites while permitting inhibition at polar sites. This ensures cell division at the proper site by restricting the formation of a division septum at the midpoint of the long axis of the cell. The chain is Cell division topological specificity factor from Synechococcus sp. (strain JA-3-3Ab) (Cyanobacteria bacterium Yellowstone A-Prime).